Reading from the N-terminus, the 1244-residue chain is MQKAIRLNDGHVVSLGLLAQRDGTRKGYLSKRSSDNPKWQTKWFALLQNLLFYFESDSSSRPSGLYLLEGSICKRMPSPKRGTSSKESDKQHHYFTVNFSNDSQKSLELRTDDSKDCDEWVAAIARASYKILATEHEALMQKYLHLLQVVETEKTVAKQLRQQLEDGEVEIERLKAEIANLIKDNERIQSNQLVAPEDEDSDIKKIKKVQSFLRGWLCRRKWKNIIQDYIRSPHADSMRKRNQVVFSMLEAEAEYVQQLHILVNNFLRPLRMAASSKKPPITHDDVSSIFLNSETIMFLHQIFYQGLKARIASWPTLVLADLFDILLPMLNIYQEFVRNHQYSLQILAHCKQNRDFDKLLKQYEAKPDCEERTLETFLTYPMFQIPRYILTLHELLAHTPHEHVERNSLDYAKSKLEELSRVMHDEVSETENIRKNLAIERMITEGCEILLDTSQTFVRQGSLIQVPMSEKGKINKGRLGSLSLKKEGERQCFLFSKHLIICTRGSGSKLHLTKNGVISLIDCTLLDDPENMDDDGKGQEVDHLDFKIWVEPKDSPPFTVILVASSRQEKAAWTSDIIQCVDNIRCNGLMMNAFEENSKVTVPQMIKSDASLYCDDVDIRFSKTMNSCKVLQIRYASVERLLERLTDLRFLSIDFLNTFLHSYRVFTDAVVVLDKLISIYKKPITAIPARSLELLFSSSHNTKLLYGDAPKSPRASRKFSSPPPLAIGTSSPVRRRKLSLNIPIITGGKALELASLGCPSDGYTNIHSPISPFGKTTLDTSKLCVASSLTRTPEEIDMTTLEESSGFRKPTSDILKEESDDDQSDVDDTEVSPPTPKSFRNRITQEFPLFNYNSGIMMTCRDLMDSNRSPLSATSAFAIATAGANESPANKEIYRRMSLANTGYSSDQRNIDKEFVIRRAATNRVLNVLRHWVTKHSQDFETDDLLKYKVICFLEEVMHDPDLLPQERKAAANIMRTLTQEEITENHSMLDELLLMTEGVKTEPFENHSAMEIAEQLTLLDHLVFKSIPYEEFFGQGWMKADKNERTPYIMKTTRHFNHISNLIASEILRNEEVSARASTIEKWVAVADICRCLHNYNAVLEITSSINRSAIFRLKKTWLKVSKQTKSLFDKLQKLVSSDGRFKNLRETLRNCDPPCVPYLGMYLTDLAFLEEGTPNYTEDGLVNFSKMRMISHIIREIRQFQQTTYKIEPQPKVTQYLVDETFVLDDESLYEASLRIEPKLPT.

The 108-residue stretch at 22 to 129 (DGTRKGYLSK…WVAAIARASY (108 aa)) folds into the PH 1 domain. S71 carries the post-translational modification Phosphoserine; by PLK2. Residues 204–229 (KKIKKVQSFLRGWLCRRKWKNIIQDY) enclose the IQ domain. The DH domain occupies 240-426 (KRNQVVFSML…EELSRVMHDE (187 aa)). The region spanning 456–582 (TFVRQGSLIQ…WTSDIIQCVD (127 aa)) is the PH 2 domain. Residues S575 and S611 each carry the phosphoserine; by PLK2 modification. One can recognise an N-terminal Ras-GEF domain in the interval 629 to 743 (KVLQIRYASV…RRRKLSLNIP (115 aa)). The segment at 707 to 730 (GDAPKSPRASRKFSSPPPLAIGTS) is disordered. S739 is subject to Phosphoserine. Residues S760 and S781 each carry the phosphoserine; by PLK2 modification. The tract at residues 800 to 840 (TLEESSGFRKPTSDILKEESDDDQSDVDDTEVSPPTPKSFR) is disordered. Over residues 818–830 (ESDDDQSDVDDTE) the composition is skewed to acidic residues. S854 is subject to Phosphoserine; by PLK2. In terms of domain architecture, Ras-GEF spans 1009 to 1241 (SAMEIAEQLT…YEASLRIEPK (233 aa)).

Homooligomer and heterooligomer with RASGRF2. Interacts with USP8, thereby regulating its stability. Phosphorylated by PLK2, leading to ubiquitination and degradation by the proteasome. In terms of processing, ubiquitinated and degraded following phosphorylation by PLK2. Post-translationally, phosphorylated by SRC and LCK. Phosphorylation by LCK increases its capacity to stimulate the GDP/GTP exchange on Ras, whereas its phosphorylation by SRC seems not to have an effect on stimulation activity.

Functionally, promotes the exchange of Ras-bound GDP by GTP. The protein is Ras-specific guanine nucleotide-releasing factor 1 (Rasgrf1) of Rattus norvegicus (Rat).